A 252-amino-acid polypeptide reads, in one-letter code: DNA-directed RNA polymerase III subunit rpc8 (252 aa).

Residues 214–252 are disordered; sequence WTNQSAGDDDENEEDGGENQDDEVAEDDGGEEPTIEEDE. Residues 220 to 252 are compositionally biased toward acidic residues; the sequence is GDDDENEEDGGENQDDEVAEDDGGEEPTIEEDE.

This sequence belongs to the eukaryotic RPB7/RPC8 RNA polymerase subunit family. As to quaternary structure, component of the RNA polymerase III (Pol III) complex consisting of several subunits.

The protein localises to the nucleus. In terms of biological role, DNA-dependent RNA polymerase catalyzes the transcription of DNA into RNA using the four ribonucleoside triphosphates as substrates. This chain is DNA-directed RNA polymerase III subunit rpc8 (polr3h-1), found in Dictyostelium discoideum (Social amoeba).